The primary structure comprises 311 residues: Protease HtpX homolog 1 (311 aa).

Transmembrane regions (helical) follow at residues 12-32 and 35-55; these read VISLGLTIISEGIVLIGIASL and ISLFFIFPALVIFWLFQWIIS. Position 137 (His137) interacts with Zn(2+). Residue Glu138 is part of the active site. His141 contacts Zn(2+). Transmembrane regions (helical) follow at residues 159-179 and 184-204; these read VLGYISTLLMNFGYLALFLAA and LLFAIAALAIGFVIFVVTFIL. Glu216 lines the Zn(2+) pocket.

Belongs to the peptidase M48B family. It depends on Zn(2+) as a cofactor.

The protein resides in the cell membrane. This chain is Protease HtpX homolog 1, found in Saccharolobus solfataricus (strain ATCC 35092 / DSM 1617 / JCM 11322 / P2) (Sulfolobus solfataricus).